The sequence spans 206 residues: Thymidylate kinase (206 aa).

ATP is bound at residue 10–17; it reads GVDGVGKT.

It belongs to the thymidylate kinase family.

The enzyme catalyses dTMP + ATP = dTDP + ADP. Phosphorylation of dTMP to form dTDP in both de novo and salvage pathways of dTTP synthesis. This is Thymidylate kinase from Bifidobacterium longum (strain DJO10A).